The following is a 131-amino-acid chain: Neo-calmodulin (131 aa).

EF-hand domains follow at residues 1-32, 33-68, 70-105, and 106-131; these read EFKEAFSLFDKDGDGTITTKELGTVMRSLGQN, PTEAELQDMINEVDADGNGTIDFPEFLTMMARKMKD, DSEEEIREAFRVFDKDSNGYISAAELRHVMTNLGEK, and LTDEEVDEMIREADIDGDGQVNYEEF. Ca(2+)-binding residues include Asp10, Asp12, Asp14, Thr16, Glu21, Asp46, Asp48, Asn50, Thr52, Glu57, Asp83, Asp85, Asn87, Tyr89, Glu94, Asp119, Asp121, Asp123, Gln125, and Glu130.

It belongs to the calmodulin family.

The protein is Neo-calmodulin of Gallus gallus (Chicken).